Consider the following 459-residue polypeptide: Cysteine--tRNA ligase (459 aa).

Cys-28 is a Zn(2+) binding site. The short motif at 30-40 (ITIYDLCHIGH) is the 'HIGH' region element. Cys-209, His-234, and Glu-238 together coordinate Zn(2+). Residues 266-270 (KMSKS) carry the 'KMSKS' region motif. Lys-269 provides a ligand contact to ATP.

It belongs to the class-I aminoacyl-tRNA synthetase family. In terms of assembly, monomer. Requires Zn(2+) as cofactor.

The protein resides in the cytoplasm. The catalysed reaction is tRNA(Cys) + L-cysteine + ATP = L-cysteinyl-tRNA(Cys) + AMP + diphosphate. This chain is Cysteine--tRNA ligase, found in Shewanella woodyi (strain ATCC 51908 / MS32).